The sequence spans 551 residues: Cytochrome bc1 complex cytochrome b subunit (551 aa).

A helical transmembrane segment spans residues 44-64 (FLLGEIALYSFIVLLLTGVYL). Heme contacts are provided by histidine 113 and histidine 127. 3 helical membrane passes run 117–137 (ALMFTAAIMVHLARIFFTGAF), 145–165 (WVIGSLLLILAMFEGYFGYSM), and 188–208 (VIGTWLHWALFGGDFPGTILI). The heme site is built by histidine 215 and histidine 230. 5 consecutive transmembrane segments (helical) span residues 216–236 (ILLIPGVILALIGLHLALVWF), 265–285 (SGAFFAAIVGVLGLMGGFLQI), 334–354 (PVWVAVIMALVFVLLITYPFL), 380–400 (IGAMAITFYMVLTLAAMNDII), and 417–437 (IGMVILPLLVYFITYRWCIGL). The interval 532-551 (ALREHQDSIASSPNGERGKH) is disordered.

This sequence belongs to the cytochrome b family. As to quaternary structure, the cytochrome bc1 complex is composed of a cytochrome b (QcrB), the Rieske iron-sulfur protein (QcrA) and a diheme cytochrome c (QcrC) subunit. It depends on heme as a cofactor.

The protein resides in the cell membrane. The enzyme catalyses a quinol + 2 Fe(III)-[cytochrome c](out) = a quinone + 2 Fe(II)-[cytochrome c](out) + 2 H(+)(out). Its function is as follows. Cytochrome b subunit of the cytochrome bc1 complex, an essential component of the respiratory electron transport chain required for ATP synthesis. The bc1 complex catalyzes the oxidation of ubiquinol and the reduction of cytochrome c in the respiratory chain. The bc1 complex operates through a Q-cycle mechanism that couples electron transfer to generation of the proton gradient that drives ATP synthesis. The cytochrome b subunit contains two ubiquinol reactive sites: the oxidation (QP) site and the reduction (QN) site. The sequence is that of Cytochrome bc1 complex cytochrome b subunit (qcrB) from Mycobacterium leprae (strain TN).